The primary structure comprises 440 residues: Doublesex- and mab-3-related transcription factor A2 (440 aa).

Residues 59 to 106 constitute a DNA-binding region (DM); sequence CARCRNHGVVSALKGHKRYCRWKDCMCAKCTLIAERQRVMAAQVALRR. A disordered region spans residues 167 to 261; it reads PKTPLPGTVT…SPSSAASRQM (95 aa). Positions 199 to 213 are enriched in basic and acidic residues; it reads DMRHGSGSENGDRES. The segment covering 229-241 has biased composition (low complexity); the sequence is TPGSISPIGSDSG. Residues 251 to 261 show a composition bias toward polar residues; that stretch reads PSPSSAASRQM. In terms of domain architecture, DMA spans 261 to 296; that stretch reads MNAIDILTRVFPNHKRSVLELVLQGCGKNVVQAIEQ.

This sequence belongs to the DMRT family. In terms of tissue distribution, restrictively expressed in brain and developing germ cells, especially in spermatogonia, spermatocytes, spermatids, and sperm cells, and in developing oocytes, including early perinucleolus stage oocyte, late yolk vesicle stage oocyte, and oil drop stage oocyte.

Its subcellular location is the nucleus. May be involved in sexual development. The protein is Doublesex- and mab-3-related transcription factor A2 (dmrta2) of Danio rerio (Zebrafish).